Reading from the N-terminus, the 126-residue chain is Small ribosomal subunit protein uS13 (126 aa).

A disordered region spans residues 94–126; that stretch reads RGLPVHGQRTSTNARTRKGPRRAIAGKKKPGKK. Residues 108 to 126 are compositionally biased toward basic residues; it reads RTRKGPRRAIAGKKKPGKK.

Belongs to the universal ribosomal protein uS13 family. In terms of assembly, part of the 30S ribosomal subunit. Forms a loose heterodimer with protein S19. Forms two bridges to the 50S subunit in the 70S ribosome.

Functionally, located at the top of the head of the 30S subunit, it contacts several helices of the 16S rRNA. In the 70S ribosome it contacts the 23S rRNA (bridge B1a) and protein L5 of the 50S subunit (bridge B1b), connecting the 2 subunits; these bridges are implicated in subunit movement. Contacts the tRNAs in the A and P-sites. This Streptomyces griseus subsp. griseus (strain JCM 4626 / CBS 651.72 / NBRC 13350 / KCC S-0626 / ISP 5235) protein is Small ribosomal subunit protein uS13.